Reading from the N-terminus, the 117-residue chain is Small ribosomal subunit protein bS6 (117 aa).

Residues 96 to 117 (KEAAAPAPKAAPVESAPAVEAE) form a disordered region. Low complexity predominate over residues 99–117 (AAPAPKAAPVESAPAVEAE).

It belongs to the bacterial ribosomal protein bS6 family.

Its function is as follows. Binds together with bS18 to 16S ribosomal RNA. The chain is Small ribosomal subunit protein bS6 from Geobacter sulfurreducens (strain ATCC 51573 / DSM 12127 / PCA).